We begin with the raw amino-acid sequence, 197 residues long: Recombination protein RecR (197 aa).

The segment at 56 to 71 (CQQCRTLTEQALCNIC) adopts a C4-type zinc-finger fold. Residues 79–174 (KELCIVETPA…KVSRIAHGIP (96 aa)) enclose the Toprim domain.

The protein belongs to the RecR family.

May play a role in DNA repair. It seems to be involved in an RecBC-independent recombinational process of DNA repair. It may act with RecF and RecO. The chain is Recombination protein RecR from Saccharophagus degradans (strain 2-40 / ATCC 43961 / DSM 17024).